The following is a 144-amino-acid chain: TSC22 domain family protein 1 (144 aa).

Residues 77 to 98 (LKEQIKELIEKNSQLEQENNLL) are leucine-zipper. The interval 109 to 144 (QFQAQLQTGSPPATTQPQGTTQPPAQPASQGSGPTA) is disordered. Low complexity predominate over residues 115 to 144 (QTGSPPATTQPQGTTQPPAQPASQGSGPTA).

Belongs to the TSC-22/Dip/Bun family. Forms homodimers. Forms a heterodimer with TSC22D4/THG1. Interacts with histone H1-2. Interacts with GNL3.

The protein localises to the cytoplasm. It localises to the nucleus. Functionally, transcriptional repressor. Plays a role in the repression of hematopoietic precursor cell growth. Promotes IL2 deprivation-induced apoptosis in T-lymphocytes, via repression of TSC22D3/GILZ transcription and activation of the caspase cascade. Positively regulates cell death in response to TGFB3 during mammary gland involution. The polypeptide is TSC22 domain family protein 1 (Bos taurus (Bovine)).